The following is a 103-amino-acid chain: Small ribosomal subunit protein bS6c (103 aa).

Belongs to the bacterial ribosomal protein bS6 family.

The protein localises to the plastid. It is found in the chloroplast. Binds together with bS18 to 16S ribosomal RNA. The sequence is that of Small ribosomal subunit protein bS6c from Thalassiosira pseudonana (Marine diatom).